Consider the following 466-residue polypeptide: Soluble pyridine nucleotide transhydrogenase (466 aa).

Position 36–45 (36–45) interacts with FAD; that stretch reads ERYQNVGGGC.

Belongs to the class-I pyridine nucleotide-disulfide oxidoreductase family. As to quaternary structure, homooligomer; probable homooctamer. It depends on FAD as a cofactor.

The protein resides in the cytoplasm. It catalyses the reaction NAD(+) + NADPH = NADH + NADP(+). In terms of biological role, conversion of NADPH, generated by peripheral catabolic pathways, to NADH, which can enter the respiratory chain for energy generation. This chain is Soluble pyridine nucleotide transhydrogenase, found in Escherichia coli O157:H7.